A 163-amino-acid polypeptide reads, in one-letter code: Putative defense protein 3 (163 aa).

The first 18 residues, 1–18 (MMFAYIVAVVSALALTSA), serve as a signal peptide directing secretion. Residues 19-163 (YPTGAPSSTC…SAPVTVLSHK (145 aa)) enclose the Reelin domain. Cys-28 and Cys-103 are disulfide-bonded.

This sequence belongs to the insect defense protein family.

The protein localises to the secreted. In terms of biological role, may have antimicrobial activity. This is Putative defense protein 3 from Antheraea mylitta (Tasar silkworm).